Consider the following 172-residue polypeptide: Adenine phosphoribosyltransferase (172 aa).

The protein belongs to the purine/pyrimidine phosphoribosyltransferase family. As to quaternary structure, homodimer.

It localises to the cytoplasm. It carries out the reaction AMP + diphosphate = 5-phospho-alpha-D-ribose 1-diphosphate + adenine. It participates in purine metabolism; AMP biosynthesis via salvage pathway; AMP from adenine: step 1/1. In terms of biological role, catalyzes a salvage reaction resulting in the formation of AMP, that is energically less costly than de novo synthesis. This Streptococcus mutans serotype c (strain ATCC 700610 / UA159) protein is Adenine phosphoribosyltransferase.